Consider the following 183-residue polypeptide: Apo-citrate lyase phosphoribosyl-dephospho-CoA transferase (183 aa).

The protein belongs to the CitX family.

The enzyme catalyses apo-[citrate lyase ACP] + 2'-(5''-triphospho-alpha-D-ribosyl)-3'-dephospho-CoA = holo-[citrate lyase ACP] + diphosphate. Functionally, transfers 2-(5''-triphosphoribosyl)-3'-dephosphocoenzyme-A on a serine residue to the apo-acyl carrier protein (gamma chain) of the citrate lyase to yield holo-acyl carrier protein. The polypeptide is Apo-citrate lyase phosphoribosyl-dephospho-CoA transferase (Escherichia coli O6:K15:H31 (strain 536 / UPEC)).